The primary structure comprises 234 residues: Glutathione S-transferase sirG (234 aa).

One can recognise a GST N-terminal domain in the interval Leu-15–Gly-99. The 126-residue stretch at Asp-105–Ser-230 folds into the GST C-terminal domain.

The protein belongs to the GST superfamily.

The catalysed reaction is RX + glutathione = an S-substituted glutathione + a halide anion + H(+). The protein operates within mycotoxin biosynthesis. Glutathione S-transferase; part of the gene cluster that mediates the biosynthesis of sirodesmin PL, an epipolythiodioxopiperazine (ETP) characterized by a disulfide bridged cyclic dipeptide and that acts as a phytotoxin which is involved in the blackleg didease of canola. SirD catalyzes the O-prenylation of L-tyrosine (L-Tyr) in the presence of dimethylallyl diphosphate (DMAPP) to yield 4-O-dimethylallyl-L-Tyr, and therefore represents probably the first pathway-specific enzyme in the biosynthesis of sirodesmin PL. 4-O-dimethylallyl-L-Tyr, then undergoes condensation with L-Ser in a reaction catalyzed by the non-ribosomal peptide synthase sirP to form the diketopiperazine (DKP) backbone. Further bishydroxylation of the DKP performed by the cytochrome P450 monooxygenase sirC leads to the production of the intermediate phomamide. This step is essential to form the reactive thiol group required for toxicity of sirodesmin PL. The next steps of sirodesmin biosynthesis are not well understood yet, but some predictions could be made from intermediate compounds identification. Phomamide is converted into phomalizarine via oxidation, probably by sirT. Further oxidation, methylation (by sirM or sirN) and reduction steps convert phomalizarine to deacetyl sirodesmin. Finally, acetyltransferase sirH probably acetylates deacetyl sirodesmin to produce sirodesmin PL. The polypeptide is Glutathione S-transferase sirG (Leptosphaeria maculans (Blackleg fungus)).